The primary structure comprises 347 residues: MLKEESNESGTWARACDTCRSAACTVYCEADSAYLCTTCDARVHAANRVASRHERVRVCQSCESAPAAFLCKADAASLCTACDAEIHSANPLARRHQRVPILPLSANSCSSMAPSETDADNDEDDREVASWLLPNPGKNIGNQNNGFLFGVEYLDLVDYSSSMDNQFEDNQYTHYQRSFGGDGVVPLQVEESTSHLQQSQQNFQLGINYGFSSGAHYNNNSLKDLNHSASVSSMDISVVPESTASDITVQHPRTTKETIDQLSGPPTQVVQQLTPMEREARVLRYREKKKTRKFDKTIRYASRKAYAEIRPRIKGRFAKRIETEAEAEEIFSTSLMSETGYGIVPSF.

Positions 16, 19, 39, 44, 59, 62, 82, and 87 each coordinate Zn(2+). The B box-type 1; atypical zinc finger occupies 16-58 (CDTCRSAACTVYCEADSAYLCTTCDARVHAANRVASRHERVRV). A B box-type 2; atypical zinc finger spans residues 59–101 (CQSCESAPAAFLCKADAASLCTACDAEIHSANPLARRHQRVPI). The CCT domain maps to 278–320 (REARVLRYREKKKTRKFDKTIRYASRKAYAEIRPRIKGRFAKR).

This sequence belongs to the CONSTANS family. Highly expressed in leaves. Expressed at lower levels in stems, flowers and siliques. Not detected in roots.

The protein localises to the nucleus. Putative transcription factor. Does not affect flowering time. This chain is Zinc finger protein CONSTANS-LIKE 2 (COL2), found in Arabidopsis thaliana (Mouse-ear cress).